The sequence spans 321 residues: WD repeat-containing protein VIP3 (321 aa).

WD repeat units follow at residues 12–55 (AHED…LVRT), 58–97 (GHSLGVAALAAHPSGIIAASSSIDSFVRVFDVDTNATIAV), 100–140 (APPS…LIST), 156–195 (SSKKFVLSVAWSPNGKRLACGSMDGTICVFDVDRSKLLHQ), 198–238 (GHNM…LLGS), 241–280 (GHTSWVLSVDASPDGGAIATGSSDRTVRLWDLKMRAAIQT), and 283–319 (NHNDQVWSVAFRPPGGTGVRAGRLASVSDDKSVSLYD).

As to quaternary structure, component of the nuclear PAF1 complex (PAF1C), which consists of VIP2/ELF7/PAF1, VIP3/SKI8/WDR61, VIP4/LEO1, VIP5/RTF1, VIP6/ELF8/CTR9 and CDC73. Component of the cytoplasmic SKI complex, which consists of SKI2, SKI3 and VIP3/SKI8. Interacts with VIP4 and VIP6.

It localises to the nucleus. The protein resides in the cytoplasm. Functionally, component of the PAF1 complex (PAF1C) which is involved in histone modifications such as methylation on histone H3 'Lys-4' (H3K4me3). Involved in regulation of flowering time. Required for the expression of the flowering repressor and MADS box gene FLC. Required for histone H3 trimethylation on 'Lys-4' (H3K4me3) and histone dimethylation on 'Lys-36' (H3K36me2) at the FLC locus. Prevents trimethylation on 'Lys-27' (H3K27me3) at the same locus. Not required for meiotic recombination or progression. Component of the SKI complex which is thought to be involved in exosome-mediated RNA decay and associates with transcriptionally active genes in a manner dependent on PAF1 complex (PAF1C). Required for proper progression of cell differentiation process. The protein is WD repeat-containing protein VIP3 of Arabidopsis thaliana (Mouse-ear cress).